The chain runs to 425 residues: Threonine synthase (425 aa).

Lysine 105 carries the post-translational modification N6-(pyridoxal phosphate)lysine.

The protein belongs to the threonine synthase family. It depends on pyridoxal 5'-phosphate as a cofactor.

It catalyses the reaction O-phospho-L-homoserine + H2O = L-threonine + phosphate. It participates in amino-acid biosynthesis; L-threonine biosynthesis; L-threonine from L-aspartate: step 5/5. Functionally, catalyzes the gamma-elimination of phosphate from L-phosphohomoserine and the beta-addition of water to produce L-threonine. The chain is Threonine synthase (thrC) from Haemophilus influenzae (strain ATCC 51907 / DSM 11121 / KW20 / Rd).